Consider the following 499-residue polypeptide: Cobyric acid synthase (499 aa).

Positions 266 to 449 (RLEIAVVRLP…LHGLFDNHLW (184 aa)) constitute a GATase cobBQ-type domain. C344 functions as the Nucleophile in the catalytic mechanism. H441 is an active-site residue.

It belongs to the CobB/CobQ family. CobQ subfamily.

Its pathway is cofactor biosynthesis; adenosylcobalamin biosynthesis. Functionally, catalyzes amidations at positions B, D, E, and G on adenosylcobyrinic A,C-diamide. NH(2) groups are provided by glutamine, and one molecule of ATP is hydrogenolyzed for each amidation. This Synechococcus sp. (strain JA-2-3B'a(2-13)) (Cyanobacteria bacterium Yellowstone B-Prime) protein is Cobyric acid synthase.